Here is a 126-residue protein sequence, read N- to C-terminus: Glycine cleavage system H protein (126 aa).

The 83-residue stretch at isoleucine 22 to lysine 104 folds into the Lipoyl-binding domain. N6-lipoyllysine is present on lysine 63.

This sequence belongs to the GcvH family. In terms of assembly, the glycine cleavage system is composed of four proteins: P, T, L and H. It depends on (R)-lipoate as a cofactor.

The glycine cleavage system catalyzes the degradation of glycine. The H protein shuttles the methylamine group of glycine from the P protein to the T protein. The polypeptide is Glycine cleavage system H protein (Bacteroides thetaiotaomicron (strain ATCC 29148 / DSM 2079 / JCM 5827 / CCUG 10774 / NCTC 10582 / VPI-5482 / E50)).